The following is an 82-amino-acid chain: RNA-binding protein TTE2299 (82 aa).

Belongs to the eukaryotic ribosomal protein eL8 family.

The chain is RNA-binding protein TTE2299 from Caldanaerobacter subterraneus subsp. tengcongensis (strain DSM 15242 / JCM 11007 / NBRC 100824 / MB4) (Thermoanaerobacter tengcongensis).